The chain runs to 214 residues: tRNA (guanine-N(7)-)-methyltransferase (214 aa).

Glutamate 44, aspartate 69, aspartate 96, and aspartate 118 together coordinate S-adenosyl-L-methionine. Aspartate 118 is a catalytic residue. Lysine 122 provides a ligand contact to substrate. Residues 124 to 129 are interaction with RNA; the sequence is KHEKRR. Residues aspartate 154 and 191-194 each bind substrate; that span reads TEYE.

It belongs to the class I-like SAM-binding methyltransferase superfamily. TrmB family.

The enzyme catalyses guanosine(46) in tRNA + S-adenosyl-L-methionine = N(7)-methylguanosine(46) in tRNA + S-adenosyl-L-homocysteine. Its pathway is tRNA modification; N(7)-methylguanine-tRNA biosynthesis. Functionally, catalyzes the formation of N(7)-methylguanine at position 46 (m7G46) in tRNA. In Enterococcus faecalis (strain ATCC 700802 / V583), this protein is tRNA (guanine-N(7)-)-methyltransferase.